The chain runs to 652 residues: Acetyl-coenzyme A synthetase (652 aa).

CoA is bound by residues 189 to 192 (RGGK) and Thr-311. Residues 387–389 (GEP), 411–416 (DTWWQT), Asp-500, and Arg-515 each bind ATP. A CoA-binding site is contributed by Ser-523. Position 526 (Arg-526) interacts with ATP. Residues Val-537, His-539, and Val-542 each coordinate Mg(2+). Arg-584 contacts CoA. Position 609 is an N6-acetyllysine (Lys-609).

The protein belongs to the ATP-dependent AMP-binding enzyme family. Requires Mg(2+) as cofactor. Acetylated. Deacetylation by the SIR2-homolog deacetylase activates the enzyme.

The enzyme catalyses acetate + ATP + CoA = acetyl-CoA + AMP + diphosphate. Its function is as follows. Catalyzes the conversion of acetate into acetyl-CoA (AcCoA), an essential intermediate at the junction of anabolic and catabolic pathways. AcsA undergoes a two-step reaction. In the first half reaction, AcsA combines acetate with ATP to form acetyl-adenylate (AcAMP) intermediate. In the second half reaction, it can then transfer the acetyl group from AcAMP to the sulfhydryl group of CoA, forming the product AcCoA. This is Acetyl-coenzyme A synthetase from Bartonella henselae (strain ATCC 49882 / DSM 28221 / CCUG 30454 / Houston 1) (Rochalimaea henselae).